Here is a 469-residue protein sequence, read N- to C-terminus: Gamma-aminobutyric acid permease (469 aa).

The Cytoplasmic segment spans residues 1–17; sequence MNQSQSGLKKELKTRHM. Residues 18–38 traverse the membrane as a helical segment; that stretch reads TMISIAGVIGAGLFVGSGSVI. Histidine 39 is a topological domain (extracellular). Residues 40–60 form a helical membrane-spanning segment; it reads STGPGAVVSYALAGLLVIFIM. Topologically, residues 61 to 94 are cytoplasmic; sequence RMLGEMSAVNPTSGSFSQYAHDAIGPWAGFTIGW. A helical transmembrane segment spans residues 95-115; that stretch reads LYWFFWVIVIAIEAIAGAGII. Residue glutamine 116 is a topological domain, extracellular. Residues 117–137 traverse the membrane as a helical segment; it reads YWFHDIPLWLTSLILTIVLTL. Residues 138–157 are Cytoplasmic-facing; the sequence is TNVYSVKSFGEFEYWFSLIK. A helical membrane pass occupies residues 158 to 178; that stretch reads VVTIIAFLIVGFAFIFGFAPG. Residues 179–200 lie on the Extracellular side of the membrane; the sequence is SEPVGFSNLTGKGGFFPEGISS. The helical transmembrane segment at 201–221 threads the bilayer; sequence VLLGIVVVIFSFMGTEIVAIA. Residues 222–242 are Cytoplasmic-facing; sequence AGETSNPIESVTKATRSVVWR. A helical membrane pass occupies residues 243 to 263; sequence IIVFYVGSIAIVVALLPWNSA. The Extracellular portion of the chain corresponds to 264-269; the sequence is NILESP. A helical membrane pass occupies residues 270–290; the sequence is FVAVLEHIGVPAAAQIMNFIV. Topologically, residues 291–328 are cytoplasmic; that stretch reads LTAVLSCLNSGLYTTSRMLYSLAERNEAPRRFMKLSKK. Residues 329-349 traverse the membrane as a helical segment; it reads GVPVQAIVAGTFFSYIAVVMN. Residues 350-355 lie on the Extracellular side of the membrane; the sequence is YFSPDT. Residues 356 to 376 form a helical membrane-spanning segment; that stretch reads VFLFLVNSSGAIALLVYLVIA. Residues 377-401 lie on the Cytoplasmic side of the membrane; that stretch reads VSQLKMRKKLEKTNPEALKIKMWLF. A helical membrane pass occupies residues 402–422; sequence PFLTYLTIIAICGILVSMAFI. At 423–425 the chain is on the extracellular side; it reads DSM. A helical membrane pass occupies residues 426 to 446; the sequence is RDELLLTGVITGIVLISYLVF. Residues 447 to 469 are Cytoplasmic-facing; it reads RKRKVSEKAAANPVTQQQPDILP.

Belongs to the amino acid-polyamine-organocation (APC) superfamily. Amino acid transporter (AAT) (TC 2.A.3.1) family.

It localises to the cell membrane. The enzyme catalyses 4-aminobutanoate(in) + H(+)(in) = 4-aminobutanoate(out) + H(+)(out). It catalyses the reaction beta-alanine(in) + H(+)(in) = beta-alanine(out) + H(+)(out). It participates in amino-acid degradation; 4-aminobutanoate degradation. Transporter for gamma-aminobutyrate (GABA). Can also transport beta-alanine. Can translocate several open-chain GABA analogs (3-aminobutyrate, 3-aminopropanoate, cis-4-aminobutenoate) across the membrane via counterflow against GABA, but cannot transport muscimol. Also functions as a low-affinity proline importer. This Bacillus subtilis (strain 168) protein is Gamma-aminobutyric acid permease.